Here is a 503-residue protein sequence, read N- to C-terminus: MTLREVSVATDLSDFYDLLVIGAGPAGMAAAVEASASGARVAVLDENPRPGGQIYREITRNSPDRRTYLGPDYWKGQPLAEAFCLSNVDYASRATVWSLETRDKTAGQARNVVGVTVAGSARMVETNAVVLATGAQERPMPVPGWTLPGVMTAGAAQIALKAAGAMPAGPVVLIGCGPLLYLLASQLVDAGVPDLTVLDTAQSPFRGAVLRHMPEFLLSPYVLKGIGLLLKVRRHAQVVYGVRSIAIIGSQHAESVRYAVGQGERSIPAKSVLLHQGVIPSTSLSNAAGCELQWNDEQRAFQPVTDHDGRTTKAGIYVAGDGAGIAGAQAAEVSGRLAALAALADLKLVSTQTSSTSIKSRHAQARRFLRGRAFLDALYTPRQSFLAPSAPETIVCRCEEITVRKLREAIALGPPGPNQLKTFVRCGMGQCQGRLCAATVTEIMVAEERKVSPADVGTYRLRSPVKPVRLAELAHLPHTARALKAVTGRDPVDHDTTETGHIL.

To T-protein and to dimethylglycine dehydrogenase. Heterodimer of a subunit A and a subunit B.

It participates in opine metabolism; octopine degradation. Oxidative cleavage of octopine into L-arginine and pyruvate. The protein is Opine oxidase subunit A (ooxA) of Agrobacterium tumefaciens (strain Ach5).